Here is a 473-residue protein sequence, read N- to C-terminus: MNAKPGFTDYIVKDISLADFGRKELSLAETEMPGLMATREEFGPKQPLKGARIAGSLHMTIQTGVLIETLAALGADIRWVSCNIYSTQDHAAAAIAAAGIPVFAVKGETLTEYWDYTAKLFDWHGGGHPNMILDDGGDATMYVHLGLRAENGDTAFLDKPGSEEEEVFFALLKKQLKEKPKGYFAEIAKSIKGVSEETTTGVHRLYDMQKAGTLLWPAINVNDSVTKSKFDNLYGCRESLVDGIRRGTDVMMSGKVAMVAGFGDVGKGSAASLRQAGCRVMVSEVDPICALQAAMEGYEVVTMEDAAPRADIFVTATGNKDIITIEHMRAMKDRAIVCNIGHFDNEIQIAGLRNLKWTNIKPQVDEIEFPDKHRIIMLSEGRLVNLGNAMGHPSFVMSASFTNQTLAQIELFANNKDGKYKKEVYVLPKTLDEKVARLHLAKIGVKLTELRKDQADYIGVKQEGPYKSDHYRY.

Residues threonine 60, aspartate 135, and glutamate 197 each coordinate substrate. Threonine 198–threonine 200 lines the NAD(+) pocket. Residues lysine 227 and aspartate 231 each contribute to the substrate site. NAD(+) contacts are provided by residues asparagine 232, glycine 261–glycine 266, glutamate 284, asparagine 319, isoleucine 340–histidine 342, and asparagine 385.

It belongs to the adenosylhomocysteinase family. NAD(+) is required as a cofactor.

It is found in the cytoplasm. The catalysed reaction is S-adenosyl-L-homocysteine + H2O = L-homocysteine + adenosine. It functions in the pathway amino-acid biosynthesis; L-homocysteine biosynthesis; L-homocysteine from S-adenosyl-L-homocysteine: step 1/1. In terms of biological role, may play a key role in the regulation of the intracellular concentration of adenosylhomocysteine. This is Adenosylhomocysteinase from Bradyrhizobium diazoefficiens (strain JCM 10833 / BCRC 13528 / IAM 13628 / NBRC 14792 / USDA 110).